The chain runs to 441 residues: MFS-type transporter (441 aa).

A disordered region spans residues 1-47 (MPPQQEQDTDSDAIRSYNEESKSETPGCIPDAMLSSDETSNDVASDI). The next 10 helical transmembrane spans lie at 61–81 (TLCG…FGIF), 95–115 (DISW…AFVG), 125–145 (LVLS…SLST), 150–170 (LILS…TPAV), 183–203 (LAIG…NSMA), 212–232 (FGWT…FVVV), 259–279 (FFTI…YYIA), 289–309 (TLTY…GVFG), 323–343 (LELL…WIAV), and 351–371 (VWTV…PAGI). An N-linked (GlcNAc...) asparagine glycan is attached at N388. 2 helical membrane-spanning segments follow: residues 389–409 (FTVI…IITA) and 415–435 (YGAQ…IVAA).

This sequence belongs to the major facilitator superfamily. Monocarboxylate porter (TC 2.A.1.13) family.

It localises to the membrane. Functionally, MFS-type transporter; part of the gene cluster that mediates the biosynthesis of butenolide, a mycotoxin that shows antibiotic activity but does not seem to play a major role in the spread of head blight in wheat. This Gibberella zeae (strain ATCC MYA-4620 / CBS 123657 / FGSC 9075 / NRRL 31084 / PH-1) (Wheat head blight fungus) protein is MFS-type transporter.